Reading from the N-terminus, the 155-residue chain is Small ribosomal subunit protein uS7c (155 aa).

Belongs to the universal ribosomal protein uS7 family. As to quaternary structure, part of the 30S ribosomal subunit.

It localises to the plastid. Its subcellular location is the chloroplast. In terms of biological role, one of the primary rRNA binding proteins, it binds directly to 16S rRNA where it nucleates assembly of the head domain of the 30S subunit. The protein is Small ribosomal subunit protein uS7c (rps7) of Coelogyne cristata (Orchid).